The following is a 271-amino-acid chain: Cell surface glycoprotein CD200 receptor 2 (271 aa).

Positions 1–23 are cleaved as a signal peptide; sequence MSAPRLLISIIIMVSASSSSCMG. At 24–239 the chain is on the extracellular side; the sequence is GKQMTQNYST…TSGSPALSLL (216 aa). Residues N30, N39, N86, N92, N189, and N217 are each glycosylated (N-linked (GlcNAc...) asparagine). One can recognise an Ig-like V-type domain in the interval 46–132; the sequence is MDINAVLCCP…YRGIVVTPDG (87 aa). The Ig-like C2-type domain occupies 133 to 221; it reads NFHRGYHLQV…SHLTGNKSLS (89 aa). Residues C160 and C209 are joined by a disulfide bond. The helical transmembrane segment at 240–260 threads the bilayer; that stretch reads IILYVKLSLFVVILVTTGFVF. The Cytoplasmic segment spans residues 261–271; that stretch reads FQRINHVRKVL.

The protein belongs to the CD200R family.

It is found in the membrane. Functionally, may be a receptor for the CD200/OX2 cell surface glycoprotein. The protein is Cell surface glycoprotein CD200 receptor 2 (CD200R1L) of Homo sapiens (Human).